We begin with the raw amino-acid sequence, 177 residues long: Large ribosomal subunit protein uL6 (177 aa).

It belongs to the universal ribosomal protein uL6 family. As to quaternary structure, part of the 50S ribosomal subunit.

In terms of biological role, this protein binds to the 23S rRNA, and is important in its secondary structure. It is located near the subunit interface in the base of the L7/L12 stalk, and near the tRNA binding site of the peptidyltransferase center. This Novosphingobium aromaticivorans (strain ATCC 700278 / DSM 12444 / CCUG 56034 / CIP 105152 / NBRC 16084 / F199) protein is Large ribosomal subunit protein uL6.